A 155-amino-acid chain; its full sequence is Small ribosomal subunit protein uS7 (155 aa).

This sequence belongs to the universal ribosomal protein uS7 family. Part of the 30S ribosomal subunit. Contacts proteins S9 and S11.

In terms of biological role, one of the primary rRNA binding proteins, it binds directly to 16S rRNA where it nucleates assembly of the head domain of the 30S subunit. Is located at the subunit interface close to the decoding center, probably blocks exit of the E-site tRNA. This Kosmotoga olearia (strain ATCC BAA-1733 / DSM 21960 / TBF 19.5.1) protein is Small ribosomal subunit protein uS7.